Here is a 530-residue protein sequence, read N- to C-terminus: GMP synthase [glutamine-hydrolyzing] (530 aa).

A Glutamine amidotransferase type-1 domain is found at 4-205 (RILILDYGSQ…VKDICGCEGD (202 aa)). The active-site Nucleophile is the C84. Residues H179 and E181 contribute to the active site. The 193-residue stretch at 206 to 398 (WNMPDYISEA…LGLPPQMVYR (193 aa)) folds into the GMPS ATP-PPase domain. An ATP-binding site is contributed by 233-239 (SGGVDSS).

Homodimer.

The catalysed reaction is XMP + L-glutamine + ATP + H2O = GMP + L-glutamate + AMP + diphosphate + 2 H(+). It functions in the pathway purine metabolism; GMP biosynthesis; GMP from XMP (L-Gln route): step 1/1. Its function is as follows. Catalyzes the synthesis of GMP from XMP. This Bordetella bronchiseptica (strain ATCC BAA-588 / NCTC 13252 / RB50) (Alcaligenes bronchisepticus) protein is GMP synthase [glutamine-hydrolyzing].